The chain runs to 511 residues: Protoheme IX farnesyltransferase, mitochondrial (511 aa).

Residues 1 to 23 (MSSSTESLPGTLRRTLTTSRAPA) constitute a mitochondrion transit peptide. Disordered regions lie at residues 1–27 (MSSS…ATSS) and 50–136 (HDSA…LAPD). 3 stretches are compositionally biased toward low complexity: residues 52-79 (SASS…SSTT), 104-115 (RKAAAAAAAAAA), and 126-136 (PDAPTADLAPD). Helical transmembrane passes span 168–188 (LTVL…VPSF), 197–217 (SLAP…TTLC), 253–273 (AAVL…YFGV), 275–295 (PTVS…YTPL), 303–323 (TWVG…AAAG), 344–364 (LGGW…FMPL), 398–418 (AFIP…SFAV), and 444–464 (ARGL…LALA).

Belongs to the UbiA prenyltransferase family.

The protein resides in the mitochondrion membrane. Converts protoheme IX and farnesyl diphosphate to heme O. The chain is Protoheme IX farnesyltransferase, mitochondrial (pft-1) from Neurospora crassa (strain ATCC 24698 / 74-OR23-1A / CBS 708.71 / DSM 1257 / FGSC 987).